Consider the following 174-residue polypeptide: Squamosa promoter-binding-like protein 4 (174 aa).

Residues 1–42 (MEGKRSQGQGYMKKKSYLVEEDMETDTDEEEEVGRDRVRGSR) form a disordered region. A compositionally biased stretch (acidic residues) spans 19 to 33 (VEEDMETDTDEEEEV). The segment at 51-128 (LRLCQVDRCT…AGHNERRRKS (78 aa)) adopts an SBP-type zinc-finger fold. Zn(2+) contacts are provided by Cys-54, Cys-59, Cys-76, His-79, Cys-95, Cys-98, His-102, and Cys-114. Residues 111–127 (KRSCRRRLAGHNERRRK) carry the Bipartite nuclear localization signal motif. A compositionally biased stretch (basic residues) spans 118–127 (LAGHNERRRK). 2 disordered regions span residues 118–148 (LAGHNERRRKSSGESTYGEGSGRRGINGQVV) and 155–174 (SRVEMTLPMPNSSFKRPQIR). The span at 163–174 (MPNSSFKRPQIR) shows a compositional bias: polar residues.

Zn(2+) is required as a cofactor. As to expression, expressed in the rib meristem and inter-primordial tissue of the inflorescence apex.

The protein localises to the nucleus. The protein resides in the cytoplasm. In terms of biological role, trans-acting factor that binds specifically to the consensus nucleotide sequence 5'-TNCGTACAA-3' of AP1 promoter. Promotes both vegetative phase change and flowering. The sequence is that of Squamosa promoter-binding-like protein 4 (SPL4) from Arabidopsis thaliana (Mouse-ear cress).